A 221-amino-acid chain; its full sequence is Transcription antitermination protein NusB (221 aa).

This sequence belongs to the NusB family.

Its function is as follows. Involved in transcription antitermination. Required for transcription of ribosomal RNA (rRNA) genes. Binds specifically to the boxA antiterminator sequence of the ribosomal RNA (rrn) operons. The protein is Transcription antitermination protein NusB of Synechocystis sp. (strain ATCC 27184 / PCC 6803 / Kazusa).